Consider the following 512-residue polypeptide: Kynurenine 3-monooxygenase (512 aa).

This sequence belongs to the aromatic-ring hydroxylase family. KMO subfamily. FAD is required as a cofactor.

The protein resides in the mitochondrion outer membrane. The catalysed reaction is L-kynurenine + NADPH + O2 + H(+) = 3-hydroxy-L-kynurenine + NADP(+) + H2O. The protein operates within cofactor biosynthesis; NAD(+) biosynthesis; quinolinate from L-kynurenine: step 1/3. Functionally, catalyzes the hydroxylation of L-kynurenine (L-Kyn) to form 3-hydroxy-L-kynurenine (L-3OHKyn). Required for synthesis of quinolinic acid. The sequence is that of Kynurenine 3-monooxygenase (bna4) from Neosartorya fischeri (strain ATCC 1020 / DSM 3700 / CBS 544.65 / FGSC A1164 / JCM 1740 / NRRL 181 / WB 181) (Aspergillus fischerianus).